We begin with the raw amino-acid sequence, 178 residues long: Large ribosomal subunit protein uL6 (178 aa).

It belongs to the universal ribosomal protein uL6 family. As to quaternary structure, part of the 50S ribosomal subunit.

This protein binds to the 23S rRNA, and is important in its secondary structure. It is located near the subunit interface in the base of the L7/L12 stalk, and near the tRNA binding site of the peptidyltransferase center. The protein is Large ribosomal subunit protein uL6 of Leuconostoc mesenteroides subsp. mesenteroides (strain ATCC 8293 / DSM 20343 / BCRC 11652 / CCM 1803 / JCM 6124 / NCDO 523 / NBRC 100496 / NCIMB 8023 / NCTC 12954 / NRRL B-1118 / 37Y).